A 102-amino-acid polypeptide reads, in one-letter code: Large ribosomal subunit protein uL24 (102 aa).

Belongs to the universal ribosomal protein uL24 family. As to quaternary structure, part of the 50S ribosomal subunit.

In terms of biological role, one of two assembly initiator proteins, it binds directly to the 5'-end of the 23S rRNA, where it nucleates assembly of the 50S subunit. Functionally, one of the proteins that surrounds the polypeptide exit tunnel on the outside of the subunit. The sequence is that of Large ribosomal subunit protein uL24 from Allorhizobium ampelinum (strain ATCC BAA-846 / DSM 112012 / S4) (Agrobacterium vitis (strain S4)).